We begin with the raw amino-acid sequence, 389 residues long: MQKKIMLLGSGELGKEFVIAVKRLGHFVIAVDSYNDAPAQQVADRREVINMLDGAALDAIVARHQPDVIVPEIEAIRTERFYDYEKEGIQVVPSARAANFTMNRKAIRDLASKELGLRTATYRYAASKEELKRAIGEVGVPCVVKPLMSSSGKGQSTVKTEADIEHAWSYSQSGRRGDSVEVIVEAFVPFHTEITLLTVTQKNGPTLFCPPIGHRQERGDYQESWQPCRIGDAQLHEAQEIAEKVTRSLTGAGIWGVEFFLADDGLYFSELSPRPHDTGMVTLAGTQNFTEFELHARAVLGLPIPKIELLRVGASAVVSADREGKNPDYSGLEEALGEPCTDIRIFGKPATRPYRRMGVTLAYDEPGSDVDTVKAKAIANARKVRVTSE.

N(1)-(5-phospho-beta-D-ribosyl)glycinamide contacts are provided by residues 12–13 and Glu-72; that span reads EL. Residues Arg-104, Lys-145, 150–155, 185–188, and Glu-193 contribute to the ATP site; these read SSGKGQ and EAFV. In terms of domain architecture, ATP-grasp spans 109–300; sequence DLASKELGLR…EFELHARAVL (192 aa). Mg(2+) is bound by residues Glu-258 and Glu-270. N(1)-(5-phospho-beta-D-ribosyl)glycinamide is bound by residues Asp-277, Lys-348, and 355 to 356; that span reads RR.

It belongs to the PurK/PurT family. In terms of assembly, homodimer.

It carries out the reaction N(1)-(5-phospho-beta-D-ribosyl)glycinamide + formate + ATP = N(2)-formyl-N(1)-(5-phospho-beta-D-ribosyl)glycinamide + ADP + phosphate + H(+). It functions in the pathway purine metabolism; IMP biosynthesis via de novo pathway; N(2)-formyl-N(1)-(5-phospho-D-ribosyl)glycinamide from N(1)-(5-phospho-D-ribosyl)glycinamide (formate route): step 1/1. Involved in the de novo purine biosynthesis. Catalyzes the transfer of formate to 5-phospho-ribosyl-glycinamide (GAR), producing 5-phospho-ribosyl-N-formylglycinamide (FGAR). Formate is provided by PurU via hydrolysis of 10-formyl-tetrahydrofolate. This chain is Formate-dependent phosphoribosylglycinamide formyltransferase, found in Chlorobium phaeobacteroides (strain DSM 266 / SMG 266 / 2430).